The primary structure comprises 1368 residues: DNA-directed RNA polymerase subunit beta (1368 aa).

This sequence belongs to the RNA polymerase beta chain family. The RNAP catalytic core consists of 2 alpha, 1 beta, 1 beta' and 1 omega subunit. When a sigma factor is associated with the core the holoenzyme is formed, which can initiate transcription.

It catalyses the reaction RNA(n) + a ribonucleoside 5'-triphosphate = RNA(n+1) + diphosphate. DNA-dependent RNA polymerase catalyzes the transcription of DNA into RNA using the four ribonucleoside triphosphates as substrates. The sequence is that of DNA-directed RNA polymerase subunit beta from Burkholderia ambifaria (strain ATCC BAA-244 / DSM 16087 / CCUG 44356 / LMG 19182 / AMMD) (Burkholderia cepacia (strain AMMD)).